Here is a 451-residue protein sequence, read N- to C-terminus: Ubiquitin hydrolase B (451 aa).

In terms of domain architecture, USP spans 19-450; sequence RGLINTSNTC…EAYLLLYQLV (432 aa). Residues 83-115 are compositionally biased toward low complexity; sequence NNSNSTTTTSSSSTTATTTSTSNNNKSQTPTSP. The segment at 83–154 is disordered; sequence NNSNSTTTTS…PPINPKHFND (72 aa). Positions 116 to 135 are enriched in polar residues; sequence IQQHHQSQTNGLSNQPSVAT. The Nucleophile role is filled by His-399. The active-site Proton acceptor is His-408.

Belongs to the peptidase C19 family. Interacts with mkkA (via F-box/WD40 domains).

It carries out the reaction Thiol-dependent hydrolysis of ester, thioester, amide, peptide and isopeptide bonds formed by the C-terminal Gly of ubiquitin (a 76-residue protein attached to proteins as an intracellular targeting signal).. Functionally, required for proper prespore cell patterning. Plays a role in stabilizing mkkA by preventing it from being targeted for degradation. ubcB and ubpB differentially control ubiquitination/deubiquitination and degradation of mkkA in a cell-type-specific and temporally regulated manner. This Dictyostelium discoideum (Social amoeba) protein is Ubiquitin hydrolase B (ubpB).